A 1785-amino-acid chain; its full sequence is BCL-6 corepressor-like protein 1 (1785 aa).

Disordered stretches follow at residues 65–101, 113–137, and 343–368; these read VGSG…KMDY, VPLS…NSRA, and ASTP…GPPS. The segment covering 83–97 has biased composition (basic and acidic residues); the sequence is KLGHKSEDKPDDPQP. S496 carries the phosphoserine modification. Composition is skewed to polar residues over residues 527 to 539 and 586 to 600; these read PCTS…TTQP and GTEQ…TFSP. Disordered regions lie at residues 527 to 550 and 562 to 646; these read PCTS…PLAD and PTPQ…PMPV. Residues S599 and S613 each carry the phosphoserine modification. A Glycyl lysine isopeptide (Lys-Gly) (interchain with G-Cter in SUMO2) cross-link involves residue K747. 3 disordered regions span residues 753-781, 876-901, and 937-977; these read IIDQ…QPST, SSSE…EQDP, and VQPS…LKLA. Phosphoserine occurs at positions 1029 and 1033. K1092 is covalently cross-linked (Glycyl lysine isopeptide (Lys-Gly) (interchain with G-Cter in SUMO2)). 2 disordered regions span residues 1107–1293 and 1312–1487; these read PDDV…QGRR and WDTN…PEAR. S1162 carries the phosphoserine modification. The span at 1176 to 1185 shows a compositional bias: basic residues; it reads VRGKHKHRKP. Positions 1195–1213 are enriched in basic and acidic residues; it reads KRADSHEEGSLEKKAKSSF. Polar residues predominate over residues 1222 to 1234; sequence STRTRSQSGSICS. Positions 1271 to 1284 are enriched in basic and acidic residues; it reads TQRDTQYRSHHAQD. The span at 1314–1324 shows a compositional bias: acidic residues; that stretch reads TNEEEEEEEEE. The Nuclear localization signal signature appears at 1328 to 1336; it reads KRKKRRRQK. The span at 1328-1339 shows a compositional bias: basic residues; sequence KRKKRRRQKSRK. Residues 1352-1363 show a composition bias toward basic and acidic residues; sequence EQRRKGRADLKA. Residues 1440 to 1449 show a composition bias toward polar residues; the sequence is WSQQKTRSPK. Residues 1461–1480 are compositionally biased toward low complexity; the sequence is TPSKSRSASSEEASESPTAR. Position 1476 is a phosphoserine (S1476). 3 ANK repeats span residues 1529-1558, 1562-1591, and 1595-1623; these read AGYT…NVNC, DGTR…DPTL, and SGQT…QGRA. The PCGF Ub-like fold domain (PUFD); required for the interaction with the KDM2B-SKP1 heterodimeric complex stretch occupies residues 1668-1785; that stretch reads DDFMFELSDK…SEVEFQSCNS (118 aa).

This sequence belongs to the BCOR family. In terms of assembly, interacts with PCGF1, forming heterodimers. The PCGF1-BCORL1 heterodimeric complex interacts with the KDM2B-SKP1 heterodimeric complex to form a homotetrameric polycomb repression complex 1 (PRC1.1). Interacts with SKP1. Interacts with CTBP1, HDAC4, HDAC5 and HDAC7. In terms of tissue distribution, detected in testis and prostate. Detected at lower levels in peripheral blood leukocytes and spleen. Mainly expressed in the spermatogonia and primary spermatocytes.

The protein resides in the nucleus. In terms of biological role, transcriptional corepressor. May specifically inhibit gene expression when recruited to promoter regions by sequence-specific DNA-binding proteins such as BCL6. This repression may be mediated at least in part by histone deacetylase activities which can associate with this corepressor. The chain is BCL-6 corepressor-like protein 1 from Homo sapiens (Human).